Here is a 231-residue protein sequence, read N- to C-terminus: Large ribosomal subunit protein uL1 (231 aa).

This sequence belongs to the universal ribosomal protein uL1 family. In terms of assembly, part of the 50S ribosomal subunit.

In terms of biological role, binds directly to 23S rRNA. The L1 stalk is quite mobile in the ribosome, and is involved in E site tRNA release. Its function is as follows. Protein L1 is also a translational repressor protein, it controls the translation of the L11 operon by binding to its mRNA. This is Large ribosomal subunit protein uL1 from Thiobacillus denitrificans (strain ATCC 25259 / T1).